The following is a 427-amino-acid chain: Serine--tRNA ligase (427 aa).

236-238 (TAE) serves as a coordination point for L-serine. 267–269 (RSE) serves as a coordination point for ATP. Glutamate 290 contributes to the L-serine binding site. Residue 354 to 357 (EISS) coordinates ATP. An L-serine-binding site is contributed by serine 388.

Belongs to the class-II aminoacyl-tRNA synthetase family. Type-1 seryl-tRNA synthetase subfamily. Homodimer. The tRNA molecule binds across the dimer.

Its subcellular location is the cytoplasm. The catalysed reaction is tRNA(Ser) + L-serine + ATP = L-seryl-tRNA(Ser) + AMP + diphosphate + H(+). The enzyme catalyses tRNA(Sec) + L-serine + ATP = L-seryl-tRNA(Sec) + AMP + diphosphate + H(+). Its pathway is aminoacyl-tRNA biosynthesis; selenocysteinyl-tRNA(Sec) biosynthesis; L-seryl-tRNA(Sec) from L-serine and tRNA(Sec): step 1/1. Catalyzes the attachment of serine to tRNA(Ser). Is also able to aminoacylate tRNA(Sec) with serine, to form the misacylated tRNA L-seryl-tRNA(Sec), which will be further converted into selenocysteinyl-tRNA(Sec). In Psychrobacter arcticus (strain DSM 17307 / VKM B-2377 / 273-4), this protein is Serine--tRNA ligase.